Consider the following 114-residue polypeptide: Small ribosomal subunit protein uS14m (114 aa).

The protein belongs to the universal ribosomal protein uS14 family.

It is found in the mitochondrion. In Eremothecium gossypii (strain ATCC 10895 / CBS 109.51 / FGSC 9923 / NRRL Y-1056) (Yeast), this protein is Small ribosomal subunit protein uS14m (MRP2).